Consider the following 230-residue polypeptide: Small ribosomal subunit protein uS3c (230 aa).

The region spanning 39-109 (IRSFIHGKLS…QIRVNVVEIS (71 aa)) is the KH type-2 domain.

The protein belongs to the universal ribosomal protein uS3 family. Part of the 30S ribosomal subunit.

It is found in the plastid. Its subcellular location is the chloroplast. This Porphyra purpurea (Red seaweed) protein is Small ribosomal subunit protein uS3c (rps3).